The primary structure comprises 368 residues: MTRGFTPSLPVEFPKMGSFRRPRPRFMSSPALSDLPRFQAARQALQLSSNSAWNSVQTAVINVFKGGGLQSNELYALNENIRRLLKSELGSFITDYFQNQLLAKGLLFVEEKIKLCEGENRIEVLAEVWDHFFTETLPTLQAIFYPVQGQELTIRQISLLGFRDLVLLKVKLEDLLLLAQPQLPSSIVQMLLILQSVHEPTGPSEGYLQLEELVKQVVSPFLGISEDRGLSGPTYTLARRHSRVRPKVTLLNYASPITPVSRPLNEMALTPLTEQEGEAYLEKCGSVRRHTVANAHSDIQLLAMATMMHSGLGEESGGEDKCLLLQPSFPPPHRQCSSEPNITDGPDEPEQGATGSQEDSELNCASLS.

The residue at position 28 (Ser-28) is a Phosphoserine. The tract at residues 312–368 is disordered; it reads LGEESGGEDKCLLLQPSFPPPHRQCSSEPNITDGPDEPEQGATGSQEDSELNCASLS. Residues 353–368 are compositionally biased toward polar residues; it reads ATGSQEDSELNCASLS.

This sequence belongs to the PROTOR family. Interacts with the mammalian target of rapamycin complex 2 (mTORC2) which contains MTOR, MLST8, PRR5, RICTOR, MAPKAP1 and DEPTOR. Interacts with RFFL. Interacts (via C-terminus) with ZFP36 (via C-terminus); this interaction may accelerate ZFP36-mediated mRNA decay during stress. Interacts with RICTOR. Ubiquitinated. Ubiquitination by RFFL promotes proteasomal degradation of PRR5L thereby modifying the substrate-specific activity of the mTORC2 complex. Ubiquitination by RFFL is stimulated by LPA/lysophosphatidic acid.

In terms of biological role, associates with the mTORC2 complex that regulates cellular processes including survival and organization of the cytoskeleton. Regulates the activity of the mTORC2 complex in a substrate-specific manner preventing for instance the specific phosphorylation of PKCs and thereby controlling cell migration. Plays a role in the stimulation of ZFP36-mediated mRNA decay of several ZFP36-associated mRNAs, such as TNF-alpha and GM-CSF, in response to stress. Required for ZFP36 localization to cytoplasmic stress granule (SG) and P-body (PB) in response to stress. The protein is Proline-rich protein 5-like (PRR5L) of Bos taurus (Bovine).